Consider the following 128-residue polypeptide: MAYRKLGRTSSQRKAMLRDLTTDLLINESIVTTEARAKEIRKTVEKMITLGKRGDLHARRQAAAYVRNEIASENYDEATDKYTSTTALQKLFSEIAPRYAERNGGYTRILKTEPRRGDAAPMAIIELV.

This sequence belongs to the bacterial ribosomal protein bL17 family. Part of the 50S ribosomal subunit. Contacts protein L32.

This Streptococcus equi subsp. equi (strain 4047) protein is Large ribosomal subunit protein bL17.